The sequence spans 556 residues: Formate--tetrahydrofolate ligase (556 aa).

65-72 (TPAGEGKS) is an ATP binding site.

It belongs to the formate--tetrahydrofolate ligase family.

It catalyses the reaction (6S)-5,6,7,8-tetrahydrofolate + formate + ATP = (6R)-10-formyltetrahydrofolate + ADP + phosphate. Its pathway is one-carbon metabolism; tetrahydrofolate interconversion. This chain is Formate--tetrahydrofolate ligase, found in Clostridium acetobutylicum (strain ATCC 824 / DSM 792 / JCM 1419 / IAM 19013 / LMG 5710 / NBRC 13948 / NRRL B-527 / VKM B-1787 / 2291 / W).